The following is a 417-amino-acid chain: MFTKAMNIADFDNELAQAIADEATRQEDHIELIASENYCSPRVMEAQGSCLTNKYAEGYPRKRYYGGCEYVDIVEELAIARVKMLFAADYANVQPHSGSQANAAVFLALLEPGDTVLGMDLDHGGHLTHGSKVSFSGKTYNSIGYGIDDKGLIDYDAVAQLAEKHRPKMIIAGFSAYSQVLDFQRFREIADSVGAYLMVDMAHVAGLVAAGLYPNPVPFADVVTSTTHKTLRGPRGGIILAKANPTIEKKLNSAIFPGSQGGPLMHVIAAKAVAFKEALEPSFQKYQEQVVENAKTMAKVFIARGYDIVSGGTQNHLMLVSLINKGLTGKAANDALSRAHITVNKNSVPNDPQSPFVTSGIRIGTPAITTRGFGVNEVKKVANWICDVLDDIDNEEVILNVRNKVAELCAEFPVYGQ.

Residues L121 and 125–127 (GHL) contribute to the (6S)-5,6,7,8-tetrahydrofolate site. Residue K229 is modified to N6-(pyridoxal phosphate)lysine. 354-356 (SPF) serves as a coordination point for (6S)-5,6,7,8-tetrahydrofolate.

The protein belongs to the SHMT family. Homodimer. Requires pyridoxal 5'-phosphate as cofactor.

The protein localises to the cytoplasm. The catalysed reaction is (6R)-5,10-methylene-5,6,7,8-tetrahydrofolate + glycine + H2O = (6S)-5,6,7,8-tetrahydrofolate + L-serine. Its pathway is one-carbon metabolism; tetrahydrofolate interconversion. The protein operates within amino-acid biosynthesis; glycine biosynthesis; glycine from L-serine: step 1/1. Catalyzes the reversible interconversion of serine and glycine with tetrahydrofolate (THF) serving as the one-carbon carrier. This reaction serves as the major source of one-carbon groups required for the biosynthesis of purines, thymidylate, methionine, and other important biomolecules. Also exhibits THF-independent aldolase activity toward beta-hydroxyamino acids, producing glycine and aldehydes, via a retro-aldol mechanism. The sequence is that of Serine hydroxymethyltransferase from Dichelobacter nodosus (strain VCS1703A).